Consider the following 319-residue polypeptide: ATP-dependent 6-phosphofructokinase (319 aa).

Residues Gly-10, 71–72, and 101–104 contribute to the ATP site; these read RS and GDGS. Residue Asp-102 participates in Mg(2+) binding. Residue 125–127 coordinates substrate; sequence TID. Asp-127 (proton acceptor) is an active-site residue. Arg-154 is an ADP binding site. Residues Arg-162 and 169-171 each bind substrate; that span reads MGR. 185 to 187 contributes to the ADP binding site; sequence GAE. Substrate-binding positions include Glu-223, Arg-244, and 250–253; that span reads HVQR.

This sequence belongs to the phosphofructokinase type A (PFKA) family. ATP-dependent PFK group I subfamily. Prokaryotic clade 'B1' sub-subfamily. Homotetramer. The cofactor is Mg(2+).

The protein localises to the cytoplasm. The catalysed reaction is beta-D-fructose 6-phosphate + ATP = beta-D-fructose 1,6-bisphosphate + ADP + H(+). Its pathway is carbohydrate degradation; glycolysis; D-glyceraldehyde 3-phosphate and glycerone phosphate from D-glucose: step 3/4. With respect to regulation, allosterically activated by ADP and other diphosphonucleosides, and allosterically inhibited by phosphoenolpyruvate. Its function is as follows. Catalyzes the phosphorylation of D-fructose 6-phosphate to fructose 1,6-bisphosphate by ATP, the first committing step of glycolysis. In Wolinella succinogenes (strain ATCC 29543 / DSM 1740 / CCUG 13145 / JCM 31913 / LMG 7466 / NCTC 11488 / FDC 602W) (Vibrio succinogenes), this protein is ATP-dependent 6-phosphofructokinase.